The sequence spans 406 residues: Peptide transporter imqD (406 aa).

The segment at 1 to 25 (MTAPADSTEKSETSETTTLQTTEVS) is disordered. Over residues 14 to 25 (SETTTLQTTEVS) the composition is skewed to low complexity. The next 6 helical transmembrane spans lie at 184–204 (GLVACRVILGFILFFTCLSQA), 220–240 (IPNDTITAMNPIFCVIMGPVI), 262–282 (ATGFIMMSASMAFAAGVQKII), 309–329 (VFLQTPTYIILAVAEIFSFVT), 344–364 (AVVQALGQLGAAAGSAIGIAI), and 373–393 (LIWMYTGLAVAMFLVAVVFWI).

It belongs to the major facilitator superfamily. Proton-dependent oligopeptide transporter (POT/PTR) (TC 2.A.17) family.

It is found in the membrane. Peptide transporter; part of the gene cluster that mediates the biosynthesis of imizoquins A to D, tripeptide-derived alkaloids that serve a protective role against oxidative stress that are essential for normal germination. This Aspergillus flavus (strain ATCC 200026 / FGSC A1120 / IAM 13836 / NRRL 3357 / JCM 12722 / SRRC 167) protein is Peptide transporter imqD.